A 280-amino-acid polypeptide reads, in one-letter code: MALYCIGDIQGCDAALQRLLDTVDFSPSRDTVYLLGDLVNRGPQSAEVLRRCARGGDSLRALLGNHDLHLLAAAHGARKPSRRDTLAGVLQAPDRDALLDWLKRQPLAREHRLAGERLLMVHAGVLPSWTADATLEHAAEVQARLQGDALPEFLQAMYGNAPDRWSDELSGMDRWRAIVNALTRLRFCTPDGRMDFDSSEAADAAPDGLVPWFDAPGRRTRGTLVAFGHWSTLGWMNRPDLLALDTGCVWGGCLSAVRFGATLAEREHISVRCEQAQAPG.

The protein belongs to the Ap4A hydrolase family.

It carries out the reaction P(1),P(4)-bis(5'-adenosyl) tetraphosphate + H2O = 2 ADP + 2 H(+). Its function is as follows. Hydrolyzes diadenosine 5',5'''-P1,P4-tetraphosphate to yield ADP. This is Bis(5'-nucleosyl)-tetraphosphatase, symmetrical from Paracidovorax citrulli (strain AAC00-1) (Acidovorax citrulli).